We begin with the raw amino-acid sequence, 348 residues long: sn-glycerol-3-phosphate import ATP-binding protein UgpC 3 (348 aa).

An ABC transporter domain is found at 4–234 (INIIDVKKNY…PASLFVASFI (231 aa)). 36–43 (GPSGCGKS) is a binding site for ATP.

It belongs to the ABC transporter superfamily. sn-glycerol-3-phosphate importer (TC 3.A.1.1.3) family. As to quaternary structure, the complex is composed of two ATP-binding proteins (UgpC), two transmembrane proteins (UgpA and UgpE) and a solute-binding protein (UgpB).

The protein localises to the cell inner membrane. It carries out the reaction sn-glycerol 3-phosphate(out) + ATP + H2O = sn-glycerol 3-phosphate(in) + ADP + phosphate + H(+). Functionally, part of the ABC transporter complex UgpBAEC involved in sn-glycerol-3-phosphate (G3P) import. Responsible for energy coupling to the transport system. In Rhizobium johnstonii (strain DSM 114642 / LMG 32736 / 3841) (Rhizobium leguminosarum bv. viciae), this protein is sn-glycerol-3-phosphate import ATP-binding protein UgpC 3.